We begin with the raw amino-acid sequence, 189 residues long: Protein GrpE (189 aa).

The segment at 1-37 (MSDSSKEKKKKFADMVSRQKGDDQQSDNHKQTDDLNE) is disordered. The segment covering 17 to 33 (SRQKGDDQQSDNHKQTD) has biased composition (basic and acidic residues).

Belongs to the GrpE family. As to quaternary structure, homodimer.

The protein localises to the cytoplasm. Functionally, participates actively in the response to hyperosmotic and heat shock by preventing the aggregation of stress-denatured proteins, in association with DnaK and GrpE. It is the nucleotide exchange factor for DnaK and may function as a thermosensor. Unfolded proteins bind initially to DnaJ; upon interaction with the DnaJ-bound protein, DnaK hydrolyzes its bound ATP, resulting in the formation of a stable complex. GrpE releases ADP from DnaK; ATP binding to DnaK triggers the release of the substrate protein, thus completing the reaction cycle. Several rounds of ATP-dependent interactions between DnaJ, DnaK and GrpE are required for fully efficient folding. This chain is Protein GrpE, found in Wolbachia pipientis wMel.